The following is a 340-amino-acid chain: MIRLENVSVDFPAGKDAQSRAVNNVNLTIQQGEVFGIVGTSGAGKSTLLRTINLLQRPTEGRVFLGDTLISDASGRELRQHRQRIGMIFQHFNLMHTRNVYDNVAFSLRAAGKSKEEIASRVPEILALVGLQDKEASYPAQLSGGQKQRVGIARAIANHPEVLLCDEPTSALDLETSASILALLKSINVRLGITIVLISHEMSVIKSICQRMAVMTGGNIVEEGEVFTIFSAPQHAYTKQLVSHTTPIELPERFKQNNKGVLLKILFADDSVEQPILSDVAQRFQVSVNILHGNIEYINDRALGHIIAQISYRDDPAAENLAAAITYIRQNTFGVEVIND.

The ABC transporter domain occupies 2–242 (IRLENVSVDF…PQHAYTKQLV (241 aa)). Residue 39 to 46 (GTSGAGKS) participates in ATP binding.

The protein belongs to the ABC transporter superfamily. Methionine importer (TC 3.A.1.24) family. In terms of assembly, the complex is composed of two ATP-binding proteins (MetN), two transmembrane proteins (MetI) and a solute-binding protein (MetQ).

Its subcellular location is the cell inner membrane. The catalysed reaction is L-methionine(out) + ATP + H2O = L-methionine(in) + ADP + phosphate + H(+). It carries out the reaction D-methionine(out) + ATP + H2O = D-methionine(in) + ADP + phosphate + H(+). Functionally, part of the ABC transporter complex MetNIQ involved in methionine import. Responsible for energy coupling to the transport system. The sequence is that of Methionine import ATP-binding protein MetN 1 from Pectobacterium atrosepticum (strain SCRI 1043 / ATCC BAA-672) (Erwinia carotovora subsp. atroseptica).